Reading from the N-terminus, the 952-residue chain is Leucine--tRNA ligase (952 aa).

The 'HIGH' region motif lies at 66 to 77 (PYPSGAGLHVGH). The short motif at 722–726 (KMGKS) is the 'KMSKS' region element. ATP is bound at residue Lys725.

The protein belongs to the class-I aminoacyl-tRNA synthetase family.

Its subcellular location is the cytoplasm. It catalyses the reaction tRNA(Leu) + L-leucine + ATP = L-leucyl-tRNA(Leu) + AMP + diphosphate. The polypeptide is Leucine--tRNA ligase (Corynebacterium glutamicum (strain R)).